A 435-amino-acid polypeptide reads, in one-letter code: Elongation factor 1-alpha (435 aa).

The 222-residue stretch at 5–226 folds into the tr-type G domain; the sequence is KTHINLVVIG…DTMEPPKRPT (222 aa). The G1 stretch occupies residues 14-21; that stretch reads GHVDSGKS. 14 to 21 contacts GTP; the sequence is GHVDSGKS. Residues 70-74 are G2; the sequence is GITID. The G3 stretch occupies residues 91-94; sequence DAPG. Residues 91-95 and 151-154 each bind GTP; these read DAPGH and NKMD. The segment at 151-154 is G4; it reads NKMD. Residues 190–192 form a G5 region; the sequence is SGF.

It belongs to the TRAFAC class translation factor GTPase superfamily. Classic translation factor GTPase family. EF-Tu/EF-1A subfamily.

The protein resides in the cytoplasm. This protein promotes the GTP-dependent binding of aminoacyl-tRNA to the A-site of ribosomes during protein biosynthesis. The sequence is that of Elongation factor 1-alpha from Cryptosporidium parvum.